Consider the following 394-residue polypeptide: Probable nucleoredoxin 2 (394 aa).

2 consecutive Thioredoxin domains span residues 15–176 (GVGG…QTLE) and 180–327 (SVSG…EMED).

This sequence belongs to the nucleoredoxin family.

The enzyme catalyses [protein]-dithiol + NAD(+) = [protein]-disulfide + NADH + H(+). It catalyses the reaction [protein]-dithiol + NADP(+) = [protein]-disulfide + NADPH + H(+). In terms of biological role, probable thiol-disulfide oxidoreductase that may participate in various redox reactions. This chain is Probable nucleoredoxin 2, found in Oryza sativa subsp. japonica (Rice).